The following is a 457-amino-acid chain: MQKYISEARLLLALAIPVILAQIAQTAMGFVDTVMAGGYSATDMAAVAIGTSIWLPAILFGHGLLLALTPVIAQLNGSGRRERIAHQVRQGFWLAGFVSVLIMLVLWNAGYIIRSMENIDPALADKAVGYLRALLWGAPGYLFFQVARNQCEGLAKTKPGMVMGFIGLLVNIPVNYIFIYGHFGMPELGGVGCGVATAAVYWVMFLAMVSYIKRARSMRDIRNEKGTAKPDPAVMKRLIQLGLPIALALFFEVTLFAVVALLVSPLGIVDVAGHQIALNFSSLMFVLPMSLAAAVTIRVGYRLGQGSTLDAQTAARTGLMVGVCMATLTAIFTVSLREQIALLYNDNPEVVTLAAHLMLLAAVYQISDSIQVIGSGILRGYKDTRSIFYITFTAYWVLGLPSGYILALTDLVVEPMGPAGFWIGFIIGLTSAAIMMMLRMRFLQRMPSAIILQRASR.

The Cytoplasmic portion of the chain corresponds to 1–10; that stretch reads MQKYISEARL. A helical membrane pass occupies residues 11 to 31; it reads LLALAIPVILAQIAQTAMGFV. Residues 32–52 lie on the Periplasmic side of the membrane; it reads DTVMAGGYSATDMAAVAIGTS. The helical transmembrane segment at 53–73 threads the bilayer; it reads IWLPAILFGHGLLLALTPVIA. Residues 74–92 are Cytoplasmic-facing; it reads QLNGSGRRERIAHQVRQGF. The helical transmembrane segment at 93–113 threads the bilayer; the sequence is WLAGFVSVLIMLVLWNAGYII. Over 114–126 the chain is Periplasmic; the sequence is RSMENIDPALADK. The helical transmembrane segment at 127-147 threads the bilayer; it reads AVGYLRALLWGAPGYLFFQVA. The Cytoplasmic segment spans residues 148–159; it reads RNQCEGLAKTKP. Residues 160-180 traverse the membrane as a helical segment; it reads GMVMGFIGLLVNIPVNYIFIY. Residues 181 to 188 are Periplasmic-facing; the sequence is GHFGMPEL. The helical transmembrane segment at 189–209 threads the bilayer; sequence GGVGCGVATAAVYWVMFLAMV. Residues 210–242 lie on the Cytoplasmic side of the membrane; that stretch reads SYIKRARSMRDIRNEKGTAKPDPAVMKRLIQLG. Residues 243–263 traverse the membrane as a helical segment; that stretch reads LPIALALFFEVTLFAVVALLV. At 264-275 the chain is on the periplasmic side; the sequence is SPLGIVDVAGHQ. Residues 276–296 form a helical membrane-spanning segment; that stretch reads IALNFSSLMFVLPMSLAAAVT. The Cytoplasmic segment spans residues 297 to 313; that stretch reads IRVGYRLGQGSTLDAQT. The helical transmembrane segment at 314–334 threads the bilayer; the sequence is AARTGLMVGVCMATLTAIFTV. The Periplasmic segment spans residues 335–349; that stretch reads SLREQIALLYNDNPE. A helical transmembrane segment spans residues 350 to 370; the sequence is VVTLAAHLMLLAAVYQISDSI. At 371-386 the chain is on the cytoplasmic side; that stretch reads QVIGSGILRGYKDTRS. Residues 387-407 traverse the membrane as a helical segment; sequence IFYITFTAYWVLGLPSGYILA. At 408–417 the chain is on the periplasmic side; sequence LTDLVVEPMG. Residues 418–438 traverse the membrane as a helical segment; that stretch reads PAGFWIGFIIGLTSAAIMMML. Topologically, residues 439–457 are cytoplasmic; sequence RMRFLQRMPSAIILQRASR.

The protein belongs to the multi antimicrobial extrusion (MATE) (TC 2.A.66.1) family. MdtK subfamily.

The protein localises to the cell inner membrane. In terms of biological role, multidrug efflux pump that functions probably as a Na(+)/drug antiporter. The chain is Multidrug resistance protein MdtK from Shigella boydii serotype 4 (strain Sb227).